We begin with the raw amino-acid sequence, 389 residues long: S-adenosylmethionine synthase (389 aa).

ATP is bound at residue H19. Mg(2+) is bound at residue D21. E47 is a binding site for K(+). The L-methionine site is built by E60 and Q103. The tract at residues 103–113 (QSVDIAQGVSR) is flexible loop. ATP is bound by residues 168-170 (DGK), 234-235 (RF), D243, 249-250 (RK), A266, and K270. D243 lines the L-methionine pocket. K274 provides a ligand contact to L-methionine.

This sequence belongs to the AdoMet synthase family. As to quaternary structure, homotetramer; dimer of dimers. It depends on Mg(2+) as a cofactor. The cofactor is K(+).

The protein resides in the cytoplasm. The enzyme catalyses L-methionine + ATP + H2O = S-adenosyl-L-methionine + phosphate + diphosphate. Its pathway is amino-acid biosynthesis; S-adenosyl-L-methionine biosynthesis; S-adenosyl-L-methionine from L-methionine: step 1/1. Catalyzes the formation of S-adenosylmethionine (AdoMet) from methionine and ATP. The overall synthetic reaction is composed of two sequential steps, AdoMet formation and the subsequent tripolyphosphate hydrolysis which occurs prior to release of AdoMet from the enzyme. The polypeptide is S-adenosylmethionine synthase (Solidesulfovibrio magneticus (strain ATCC 700980 / DSM 13731 / RS-1) (Desulfovibrio magneticus)).